The sequence spans 572 residues: Phospholipase B-like protein B (572 aa).

Residues 1–28 (MNKLKSNFILNIVILFTILIFNINFINC) form the signal peptide. 6 N-linked (GlcNAc...) asparagine glycosylation sites follow: Asn-73, Asn-138, Asn-219, Asn-427, Asn-544, and Asn-564.

It belongs to the phospholipase B-like family.

It localises to the secreted. Its function is as follows. Probable phospholipase. The polypeptide is Phospholipase B-like protein B (plbB) (Dictyostelium discoideum (Social amoeba)).